The chain runs to 384 residues: Beta-lactamase (384 aa).

An N-terminal signal peptide occupies residues 1–29 (MDNSMKNIFRQGRLFIALSLAMTSISAFA). S87 (acyl-ester intermediate) is an active-site residue. Catalysis depends on Y172, which acts as the Proton acceptor. 337–339 (KTG) serves as a coordination point for substrate.

It belongs to the class-C beta-lactamase family.

It localises to the periplasm. The enzyme catalyses a beta-lactam + H2O = a substituted beta-amino acid. In terms of biological role, this protein is a serine beta-lactamase with a substrate specificity for cephalosporins. This Providencia stuartii protein is Beta-lactamase (ampC).